The primary structure comprises 157 residues: 6,7-dimethyl-8-ribityllumazine synthase (157 aa).

5-amino-6-(D-ribitylamino)uracil is bound by residues phenylalanine 23, 57 to 59 (AFE), and 81 to 83 (AVI). Position 86–87 (86–87 (AT)) interacts with (2S)-2-hydroxy-3-oxobutyl phosphate. Histidine 89 functions as the Proton donor in the catalytic mechanism. Phenylalanine 114 is a 5-amino-6-(D-ribitylamino)uracil binding site. (2S)-2-hydroxy-3-oxobutyl phosphate is bound at residue arginine 128.

Belongs to the DMRL synthase family.

The catalysed reaction is (2S)-2-hydroxy-3-oxobutyl phosphate + 5-amino-6-(D-ribitylamino)uracil = 6,7-dimethyl-8-(1-D-ribityl)lumazine + phosphate + 2 H2O + H(+). It functions in the pathway cofactor biosynthesis; riboflavin biosynthesis; riboflavin from 2-hydroxy-3-oxobutyl phosphate and 5-amino-6-(D-ribitylamino)uracil: step 1/2. Catalyzes the formation of 6,7-dimethyl-8-ribityllumazine by condensation of 5-amino-6-(D-ribitylamino)uracil with 3,4-dihydroxy-2-butanone 4-phosphate. This is the penultimate step in the biosynthesis of riboflavin. The protein is 6,7-dimethyl-8-ribityllumazine synthase of Desulforapulum autotrophicum (strain ATCC 43914 / DSM 3382 / VKM B-1955 / HRM2) (Desulfobacterium autotrophicum).